The primary structure comprises 115 residues: Con-Ins T1B (115 aa).

The signal sequence occupies residues M1 to G24. Positions N25 to R29 are excised as a propeptide. P34 carries the post-translational modification 4-hydroxyproline; partial. 3 cysteine pairs are disulfide-bonded: C38–C101, C50–C114, and C100–C105. Residues R52–R94 constitute a propeptide, c peptide. Position 98 is a 4-carboxyglutamate (E98). P104 carries the post-translational modification 4-hydroxyproline; partial. The residue at position 109 (E109) is a 4-carboxyglutamate; partial. A Cysteine amide modification is found at C114.

Belongs to the insulin family. Heterodimer of A and B chains; disulfide-linked. In terms of tissue distribution, expressed by the venom gland.

Its subcellular location is the secreted. This venom insulin, from a fish-hunting cone snail, facilitates prey capture by rapidly inducing hypoglycemic shock. It is one of the smallest known insulin found in nature and lacks the C-terminal segment of the B chain that, in human insulin, mediates engagement of the insulin receptor (INSR) and assembly of the hormone's hexameric storage form. Despite lacking this segment, it both binds and activates human insulin receptor (long isoform (HIR-B) of INSR) with a high potency (EC(50)=12.0 nM). In vivo, intraperitoneal injection of this peptide into zebrafish lowers blood glucose with a lower potency than human insulin. In addition, when applied to water, this peptide reduces overall locomotor activity of zebrafish larvae, observed as a significant decrease in the percentage of time spent swimming and movement frequency. When tested on a mouse model of diabetes, this insulin also lowers blood glucose with a 10-fold lower potency than human insulin. The polypeptide is Con-Ins T1B (Conus tulipa (Fish-hunting cone snail)).